Reading from the N-terminus, the 179-residue chain is Cytochrome b6-f complex iron-sulfur subunit (179 aa).

The chain crosses the membrane as a helical span at residues 21–43 (LLTFGTVTGVALGALYPVVKYFI). The 102-residue stretch at 61 to 162 (GNDVSLSKFL…ANTVDDKIIL (102 aa)) folds into the Rieske domain. Residues Cys-108, His-110, Cys-126, and His-129 each coordinate [2Fe-2S] cluster. The cysteines at positions 113 and 128 are disulfide-linked.

The protein belongs to the Rieske iron-sulfur protein family. As to quaternary structure, the 4 large subunits of the cytochrome b6-f complex are cytochrome b6, subunit IV (17 kDa polypeptide, PetD), cytochrome f and the Rieske protein, while the 4 small subunits are PetG, PetL, PetM and PetN. The complex functions as a dimer. [2Fe-2S] cluster serves as cofactor.

It is found in the cellular thylakoid membrane. It catalyses the reaction 2 oxidized [plastocyanin] + a plastoquinol + 2 H(+)(in) = 2 reduced [plastocyanin] + a plastoquinone + 4 H(+)(out). Component of the cytochrome b6-f complex, which mediates electron transfer between photosystem II (PSII) and photosystem I (PSI), cyclic electron flow around PSI, and state transitions. The sequence is that of Cytochrome b6-f complex iron-sulfur subunit from Desmonostoc sp. (strain PCC 7906) (Nostoc sp. (strain PCC 7906)).